A 317-amino-acid chain; its full sequence is tRNA(Ile)-lysidine synthase (317 aa).

30–35 is a binding site for ATP; sequence SGGSDS.

This sequence belongs to the tRNA(Ile)-lysidine synthase family.

The protein localises to the cytoplasm. It catalyses the reaction cytidine(34) in tRNA(Ile2) + L-lysine + ATP = lysidine(34) in tRNA(Ile2) + AMP + diphosphate + H(+). Ligates lysine onto the cytidine present at position 34 of the AUA codon-specific tRNA(Ile) that contains the anticodon CAU, in an ATP-dependent manner. Cytidine is converted to lysidine, thus changing the amino acid specificity of the tRNA from methionine to isoleucine. This chain is tRNA(Ile)-lysidine synthase, found in Chlamydia felis (strain Fe/C-56) (Chlamydophila felis).